A 420-amino-acid polypeptide reads, in one-letter code: Protein disulfide isomerase Creld1 (420 aa).

The signal sequence occupies residues 1-29 (MAPQPLRGLVPFLLWCLSLFLSLPGPVWL). Topologically, residues 30-362 (QPSPPPHSAP…GFFAEMTEDE (333 aa)) are extracellular. The short motif at 46-49 (CHTC) is the CXXC element. 4 disulfide bridges follow: Cys46–Cys49, Cys155–Cys169, Cys163–Cys181, and Cys183–Cys192. Residues 153-193 (LPCPGGTERPCGGYGQCEGEGTRGGSGHCDCQAGYGGEACG) form the EGF-like 1 domain. An N-linked (GlcNAc...) asparagine glycan is attached at Asn205. 2 FU repeats span residues 208–255 (HLVC…EQAT) and 268–315 (SYEC…VVCP). Positions 278 to 281 (CLGC) match the CXXC motif. Disulfide bonds link Cys278–Cys281, Cys309–Cys321, Cys314–Cys330, and Cys332–Cys343. Residues 305–342 (DVDECETVVCPGENEQCENTEGSYRCVCAEGFRQEDGI) enclose the EGF-like 2; calcium-binding domain. Residues 363-383 (MVVLQQMFFGVIICALATLAA) traverse the membrane as a helical segment. A topological domain (cytoplasmic) is located at residue Lys384. The helical transmembrane segment at 385-405 (GDLVFTAIFIGAVAAMTGYWL) threads the bilayer. The Extracellular portion of the chain corresponds to 406 to 420 (SERSDRVLEGFIKGR).

The protein belongs to the CRELD family.

The protein resides in the membrane. The catalysed reaction is Catalyzes the rearrangement of -S-S- bonds in proteins.. In terms of biological role, protein disulfide isomerase. Promotes the localization of acetylcholine receptors (AChRs) to the plasma membrane. This chain is Protein disulfide isomerase Creld1 (Creld1), found in Rattus norvegicus (Rat).